The following is a 468-amino-acid chain: 6-phosphogluconate dehydrogenase, decarboxylating (468 aa).

NADP(+) is bound by residues 10–15, 33–35, 74–76, and asparagine 102; these read GMAVMG, NRT, and VQS. Substrate contacts are provided by residues asparagine 102 and 128–130; that span reads SGG. Catalysis depends on lysine 182, which acts as the Proton acceptor. 185 to 186 contacts substrate; that stretch reads HN. Residue glutamate 189 is the Proton donor of the active site. Residues tyrosine 190, lysine 259, arginine 286, arginine 445, and histidine 451 each coordinate substrate.

This sequence belongs to the 6-phosphogluconate dehydrogenase family. As to quaternary structure, homodimer.

The enzyme catalyses 6-phospho-D-gluconate + NADP(+) = D-ribulose 5-phosphate + CO2 + NADPH. It functions in the pathway carbohydrate degradation; pentose phosphate pathway; D-ribulose 5-phosphate from D-glucose 6-phosphate (oxidative stage): step 3/3. Its function is as follows. Catalyzes the oxidative decarboxylation of 6-phosphogluconate to ribulose 5-phosphate and CO(2), with concomitant reduction of NADP to NADPH. The polypeptide is 6-phosphogluconate dehydrogenase, decarboxylating (gnd) (Buchnera aphidicola subsp. Acyrthosiphon pisum (strain APS) (Acyrthosiphon pisum symbiotic bacterium)).